Here is a 290-residue protein sequence, read N- to C-terminus: Small ribosomal subunit biogenesis GTPase RsgA (290 aa).

The CP-type G domain maps to 62–213 (KNSLVRPPIV…IADTPGFSSL (152 aa)). Residues 111 to 114 (SKTD) and 156 to 164 (GQTGVGKTT) each bind GTP. The Zn(2+) site is built by Cys237, Cys242, His244, and Cys250.

The protein belongs to the TRAFAC class YlqF/YawG GTPase family. RsgA subfamily. As to quaternary structure, monomer. Associates with 30S ribosomal subunit, binds 16S rRNA. Zn(2+) serves as cofactor.

The protein resides in the cytoplasm. Functionally, one of several proteins that assist in the late maturation steps of the functional core of the 30S ribosomal subunit. Helps release RbfA from mature subunits. May play a role in the assembly of ribosomal proteins into the subunit. Circularly permuted GTPase that catalyzes slow GTP hydrolysis, GTPase activity is stimulated by the 30S ribosomal subunit. This is Small ribosomal subunit biogenesis GTPase RsgA from Streptococcus mutans serotype c (strain ATCC 700610 / UA159).